The primary structure comprises 388 residues: 5-hydroxytryptamine receptor 4 (388 aa).

Residues 1 to 19 (MDKLDANVSSEEGFGSVEK) are Extracellular-facing. An N-linked (GlcNAc...) asparagine glycan is attached at Asn7. The chain crosses the membrane as a helical span at residues 20–44 (VVLLTFLSTVILMAILGNLLVMVAV). The Cytoplasmic portion of the chain corresponds to 45–54 (CWDRQLRKIK). Residues 55-78 (TNYFIVSLAFADLLVSVLVMPFGA) form a helical membrane-spanning segment. Topologically, residues 79–92 (IELVQDIWIYGEVF) are extracellular. A helical membrane pass occupies residues 93-117 (CLVRTSLDVLLTTASIFHLCCISLD). A disulfide bond links Cys93 and Cys184. Asp100 lines the serotonin pocket. Topologically, residues 118–133 (RYYAICCQPLVYRNKM) are cytoplasmic. Residues 134–157 (TPLRIALMLGGCWVIPTFISFLPI) form a helical membrane-spanning segment. The Extracellular segment spans residues 158 to 188 (MQGWNNIGIIDLIEKRKFNQNSNSTYCVFMV). The chain crosses the membrane as a helical span at residues 189–212 (NKPYAITCSVVAFYIPFLLMVLAY). The Cytoplasmic segment spans residues 213–257 (YRIYVTAKEHAHQIQMLQRAGASSESRPQSADQHSTHRMRTETKA). The helical transmembrane segment at 258–283 (AKTLCIIMGCFCLCWAPFFVTNIVDP) threads the bilayer. Asn279 is a serotonin binding site. Residues 284–290 (FIDYTVP) are Extracellular-facing. Residues 291 to 314 (GQVWTAFLWLGYINSGLNPFLYAF) traverse the membrane as a helical segment. Residues 315-388 (LNKSFRRAFL…PLVAAQPSDT (74 aa)) are Cytoplasmic-facing.

It belongs to the G-protein coupled receptor 1 family. Interacts (via C-terminus 330-346 AA) with GRK5; this interaction is promoted by 5-HT (serotonin). As to quaternary structure, interacts with MAGI2, MPP3, NHERF1 and SNX27 isoforms 1 and 2. Forms a complex including NHERF1 and EZR. In terms of assembly, interacts with PATJ, NOS1 and SEC23A. In terms of tissue distribution, expressed in ileum, brain, and atrium, but not in the ventricle. As to expression, mainly expressed in atria and cardiac ventricle. Expressed in all cardiovascular tissues analyzed.

The protein localises to the cell membrane. It localises to the endosome membrane. In terms of biological role, G-protein coupled receptor for 5-hydroxytryptamine (serotonin), a biogenic hormone that functions as a neurotransmitter, a hormone and a mitogen. Ligand binding causes a conformation change that triggers signaling via guanine nucleotide-binding proteins (G proteins) and modulates the activity of downstream effectors. HTR4 is coupled to G(s) G alpha proteins and mediates activation of adenylate cyclase activity. The protein is 5-hydroxytryptamine receptor 4 of Homo sapiens (Human).